A 338-amino-acid chain; its full sequence is Sesquiterpene synthase 2 (338 aa).

Mg(2+) contacts are provided by aspartate 93, asparagine 228, serine 232, and glutamate 236. A DDXXD motif motif is present at residues 93–97; that stretch reads DNISD. The short motif at 228 to 236 is the NSE/DTE motif element; the sequence is NDIFSYNVE. 2 residues coordinate (2E,6E)-farnesyl diphosphate: arginine 316 and tyrosine 317.

The protein belongs to the terpene synthase family. It depends on Mg(2+) as a cofactor.

It catalyses the reaction (2E,6E)-farnesyl diphosphate = alpha-copaene + diphosphate. The enzyme catalyses (2E,6E)-farnesyl diphosphate = beta-copaene + diphosphate. The catalysed reaction is (2E,6E)-farnesyl diphosphate = alpha-muurolene + diphosphate. It carries out the reaction (2E,6E)-farnesyl diphosphate = gamma-muurolene + diphosphate. It catalyses the reaction (2E,6E)-farnesyl diphosphate = delta-cadinene + diphosphate. In terms of biological role, terpene cyclase that catalyzes the cyclization of farnesyl diphosphate (FPP) to various sesquiterpenes, including alpha-copaene, beta-copaene, beta-elemene, alpha-muurolene, gamma-muurolene and delta-cadinene. The protein is Sesquiterpene synthase 2 of Postia placenta (strain ATCC 44394 / Madison 698-R) (Brown rot fungus).